A 95-amino-acid polypeptide reads, in one-letter code: Acylphosphatase (95 aa).

The Acylphosphatase-like domain maps to 7 to 95; that stretch reads CTMAWVYGSV…RSWDKFAILY (89 aa). Active-site residues include Arg-22 and Asn-40.

This sequence belongs to the acylphosphatase family.

It carries out the reaction an acyl phosphate + H2O = a carboxylate + phosphate + H(+). In Klebsiella pneumoniae subsp. pneumoniae (strain ATCC 700721 / MGH 78578), this protein is Acylphosphatase (acyP).